A 422-amino-acid polypeptide reads, in one-letter code: Glucosylglycerol-phosphate phosphatase (422 aa).

D403 serves as the catalytic Proton donor.

It belongs to the histidine acid phosphatase family. As to quaternary structure, monomer. Interacts with GGPS.

The catalysed reaction is 2-O-(alpha-D-glucopyranosyl)-sn-glycerol 3-phosphate + H2O = 2-O-(alpha-D-glucopyranosyl)glycerol + phosphate. Phosphorylates glucosylglycerol-phosphate the precursor of the osmoprotectant glucosylglycerol necessary for salt adaptation of Synechocystis. The polypeptide is Glucosylglycerol-phosphate phosphatase (stpA) (Synechocystis sp. (strain ATCC 27184 / PCC 6803 / Kazusa)).